We begin with the raw amino-acid sequence, 446 residues long: Phosphoglucosamine mutase (446 aa).

S100 (phosphoserine intermediate) is an active-site residue. The Mg(2+) site is built by S100, D241, D243, and D245. Position 100 is a phosphoserine (S100).

Belongs to the phosphohexose mutase family. Mg(2+) is required as a cofactor. In terms of processing, activated by phosphorylation.

The catalysed reaction is alpha-D-glucosamine 1-phosphate = D-glucosamine 6-phosphate. Functionally, catalyzes the conversion of glucosamine-6-phosphate to glucosamine-1-phosphate. This chain is Phosphoglucosamine mutase, found in Methylorubrum populi (strain ATCC BAA-705 / NCIMB 13946 / BJ001) (Methylobacterium populi).